Reading from the N-terminus, the 1411-residue chain is Regulating synaptic membrane exocytosis protein 2 (1411 aa).

Positions 1 to 33 (MSAPVGPRGRLAPIPAASQPPLQPEMPDLSHLT) are disordered. The region spanning 26-185 (MPDLSHLTEE…TKSGAWFYNS (160 aa)) is the RabBD domain. Residues 117-173 (KGDAPTCGICHKTKFADGCGHNCSYCQTKFCARCGGRVSLRSNKVMWVCNLCRKQQE) form an FYVE-type zinc finger. Residues C123, C126, C139, C142, C147, C150, C165, and C168 each coordinate Zn(2+). Basic and acidic residues-rich tracts occupy residues 203–216 (NEEA…KLHE), 273–287 (DQNR…REEY), 318–329 (DSDHLSYRDSNR), 348–366 (RDEY…RYRS), 382–401 (EQMR…RHSD), and 410–434 (EDSR…RRAA). Disordered regions lie at residues 203–598 (NEEA…SERQ) and 623–650 (SGVD…WQPS). Residue S400 is modified to Phosphoserine. The span at 451–463 (GPSSYAQRTTNHS) shows a compositional bias: polar residues. Residues 475–492 (DRPDLRRTDSLRKQHHLD) are compositionally biased toward basic and acidic residues. Positions 510-521 (RNDSLSSDQSES) are enriched in polar residues. Over residues 528–537 (KPHKSKKGGK) the composition is skewed to basic residues. Residues 558–568 (SCDDVEIESES) are compositionally biased toward acidic residues. Composition is skewed to basic and acidic residues over residues 569–583 (VSEK…RKTS) and 634–644 (NEEHSHSDKHP). Positions 668 to 754 (DGSVPRDSGA…EPQVELVVSR (87 aa)) constitute a PDZ domain. Phosphothreonine is present on T689. Residues 762–793 (IPDSTHAQLESSSSSFESQKMDRPSISVTSPM) form a disordered region. Residues S791 and S794 each carry the phosphoserine modification. Residues 805 to 928 (LSGQLSIKLW…ALLDDEPHWY (124 aa)) enclose the C2 1 domain. 2 disordered regions span residues 939–973 (PLPH…SEVS) and 993–1190 (DLQS…STET). 2 stretches are compositionally biased toward polar residues: residues 994–1015 (LQSS…SPSG) and 1049–1059 (RTMTGHYNTIS). Residues 1060–1113 (RMDRHRVMDDHYSPDRDRDCEAADRQPYHRSRSTEQRPLLERTTTRSRSTERPD) are compositionally biased toward basic and acidic residues. Over residues 1143–1153 (GSVQTSPSSTP) the composition is skewed to polar residues. Position 1148 is a phosphoserine (S1148). The 119-residue stretch at 1257-1375 (AMGDIQVGMM…ELSNMVIGWF (119 aa)) folds into the C2 2 domain. Phosphoserine is present on residues S1396 and S1399.

As to quaternary structure, interacts with RAB3A and RAB3B that have been activated by GTP-binding. Interacts with RAB3C, RAB3D and RAB26. Interacts with TSPOAP1 and RIMBP2. Interacts with PPFIA3 and PPFIA4. Interacts via its zinc finger with the first C2 domain of UNC13A. Forms a complex consisting of UNC13A, RIMS2 and RAB3A. Heterodimer with PCLO. Part of a ternary complex involving PCLO and EPAC2. As to expression, widely expressed. Expressed in melanocytes. In fetal tissues, predominantly expressed in the brain. In the retina, expressed in the outer plexiform layer (at protein level). In the cerebellum, expressed in Purkinje cells (at protein level). In the pancreas, expressed in Langerhans islets (at protein level).

Its subcellular location is the cell membrane. It is found in the synapse. The protein resides in the presynaptic cell membrane. Functionally, rab effector involved in exocytosis. May act as scaffold protein. Plays a role in dendrite formation by melanocytes. The protein is Regulating synaptic membrane exocytosis protein 2 (RIMS2) of Homo sapiens (Human).